The following is a 116-amino-acid chain: Large ribosomal subunit protein uL18 (116 aa).

It belongs to the universal ribosomal protein uL18 family. As to quaternary structure, part of the 50S ribosomal subunit; part of the 5S rRNA/L5/L18/L25 subcomplex. Contacts the 5S and 23S rRNAs.

Its function is as follows. This is one of the proteins that bind and probably mediate the attachment of the 5S RNA into the large ribosomal subunit, where it forms part of the central protuberance. The chain is Large ribosomal subunit protein uL18 from Pseudomonas fluorescens (strain SBW25).